The sequence spans 187 residues: Large ribosomal subunit protein bL21 (187 aa).

The disordered stretch occupies residues 157–187 (KVAKKAVKKTVKKATKTGAKKKAAKKTSKKA).

It belongs to the bacterial ribosomal protein bL21 family. As to quaternary structure, part of the 50S ribosomal subunit. Contacts protein L20.

This protein binds to 23S rRNA in the presence of protein L20. The protein is Large ribosomal subunit protein bL21 of Bdellovibrio bacteriovorus (strain ATCC 15356 / DSM 50701 / NCIMB 9529 / HD100).